Consider the following 178-residue polypeptide: Large ribosomal subunit protein uL6 (178 aa).

The protein belongs to the universal ribosomal protein uL6 family. Part of the 50S ribosomal subunit.

Functionally, this protein binds to the 23S rRNA, and is important in its secondary structure. It is located near the subunit interface in the base of the L7/L12 stalk, and near the tRNA binding site of the peptidyltransferase center. The sequence is that of Large ribosomal subunit protein uL6 from Staphylococcus carnosus (strain TM300).